Here is a 600-residue protein sequence, read N- to C-terminus: Oligopeptide-binding protein OppA (600 aa).

Positions 1–22 (MKKLKVTLLASSVVLAAALLSA) are cleaved as a signal peptide. Residue cysteine 23 is the site of N-palmitoyl cysteine attachment. Cysteine 23 carries the S-diacylglycerol cysteine lipid modification.

Belongs to the bacterial solute-binding protein 5 family. As to quaternary structure, the complex is composed of two ATP-binding proteins (OppD and OppF), two transmembrane proteins (OppB and OppC) and a solute-binding protein (OppA).

Its subcellular location is the cell membrane. Its function is as follows. Part of the ABC transporter complex OppABCDF involved in the uptake of oligopeptides. The protein is Oligopeptide-binding protein OppA (oppA) of Lactococcus lactis subsp. lactis (strain IL1403) (Streptococcus lactis).